The sequence spans 156 residues: MPKGEGKVVSQNKKANHDYFIEETYEAGLVLQGTEIKSIRAGKVNLKDSFAKIERGEVFLHNMHVSPYEQGNRYNHDPLRTRKLLLHRKQISKLIGATKEEGYSLVPLKLYLKNGFAKVLIGIGKGKKKYDKREDLKKKDAKREIERAFRDRQKQF.

This sequence belongs to the SmpB family.

Its subcellular location is the cytoplasm. Required for rescue of stalled ribosomes mediated by trans-translation. Binds to transfer-messenger RNA (tmRNA), required for stable association of tmRNA with ribosomes. tmRNA and SmpB together mimic tRNA shape, replacing the anticodon stem-loop with SmpB. tmRNA is encoded by the ssrA gene; the 2 termini fold to resemble tRNA(Ala) and it encodes a 'tag peptide', a short internal open reading frame. During trans-translation Ala-aminoacylated tmRNA acts like a tRNA, entering the A-site of stalled ribosomes, displacing the stalled mRNA. The ribosome then switches to translate the ORF on the tmRNA; the nascent peptide is terminated with the 'tag peptide' encoded by the tmRNA and targeted for degradation. The ribosome is freed to recommence translation, which seems to be the essential function of trans-translation. This is SsrA-binding protein from Bacillus pumilus (strain SAFR-032).